A 419-amino-acid polypeptide reads, in one-letter code: DNA ligase (419 aa).

The tract at residues 1–120 (MLNQFPGQLS…ARQKRGAHTN (120 aa)) is NTD. The interval 121 to 317 (RGMIPPMLVK…NYHSPHLAKL (197 aa)) is AD domain. Catalysis depends on lysine 151, which acts as the N6-AMP-lysine intermediate. The segment at 318–419 (KPLLDAEFIL…REPINVLEII (102 aa)) is OB domain.

The protein belongs to the ATP-dependent DNA ligase family.

The protein localises to the virion. The enzyme catalyses ATP + (deoxyribonucleotide)n-3'-hydroxyl + 5'-phospho-(deoxyribonucleotide)m = (deoxyribonucleotide)n+m + AMP + diphosphate.. In terms of biological role, very low-fidelity DNA ligase that seals nicks in double-stranded DNA during DNA repair. Together with the viral repair DNA polymerase X, fills the single nucleotide gaps generated by the AP endonuclease. It is not essential for viral replication and recombination. Displays a very low adenylation activity towards DNA with 3'-dideoxy- or 3'-amino-terminated nicks compared to regular nick DNA. This Ornithodoros (relapsing fever ticks) protein is DNA ligase.